A 668-amino-acid chain; its full sequence is Fructose-1,6-bisphosphatase class 3 (668 aa).

Belongs to the FBPase class 3 family. The cofactor is Mn(2+).

It carries out the reaction beta-D-fructose 1,6-bisphosphate + H2O = beta-D-fructose 6-phosphate + phosphate. It participates in carbohydrate biosynthesis; gluconeogenesis. The polypeptide is Fructose-1,6-bisphosphatase class 3 (Clostridium botulinum (strain ATCC 19397 / Type A)).